The sequence spans 88 residues: Large ribosomal subunit protein bL31B (88 aa).

This sequence belongs to the bacterial ribosomal protein bL31 family. Type B subfamily. In terms of assembly, part of the 50S ribosomal subunit.

In Bordetella pertussis (strain Tohama I / ATCC BAA-589 / NCTC 13251), this protein is Large ribosomal subunit protein bL31B.